Consider the following 613-residue polypeptide: Glucose-6-phosphate isomerase 1, chloroplastic (613 aa).

Residues 1 to 14 (MASLSGLYSSSPSL) are compositionally biased toward low complexity. The interval 1–21 (MASLSGLYSSSPSLKPAKNHS) is disordered. Residues 1 to 48 (MASLSGLYSSSPSLKPAKNHSFKALPAQSRDSFSFPHTSKPTNLPLTL) constitute a chloroplast transit peptide. Glu392 serves as the catalytic Proton donor. Active-site residues include His421 and Lys526. Ser595 carries the phosphoserine modification.

Belongs to the GPI family.

The protein resides in the plastid. The protein localises to the chloroplast stroma. It catalyses the reaction alpha-D-glucose 6-phosphate = beta-D-fructose 6-phosphate. Its pathway is carbohydrate degradation; glycolysis; D-glyceraldehyde 3-phosphate and glycerone phosphate from D-glucose: step 2/4. It functions in the pathway carbohydrate biosynthesis; gluconeogenesis. Inhibited by glycerol-3-P (G3P). Promotes the synthesis of starch in leaves. The polypeptide is Glucose-6-phosphate isomerase 1, chloroplastic (PGI1) (Arabidopsis thaliana (Mouse-ear cress)).